A 250-amino-acid polypeptide reads, in one-letter code: Anamorsin homolog 1 (250 aa).

The tract at residues 1-104 is N-terminal SAM-like domain; it reads MNLKITINQQ…KKLNIPQQEF (104 aa). The tract at residues 104-149 is linker; sequence FNNCYGKYDYIEQKFQNQINFFKQVDINGKQEIIDENELLDDGVQV. [2Fe-2S] cluster contacts are provided by Cys-155, Cys-162, Cys-165, and Cys-167. Positions 155–167 are fe-S binding site A; that stretch reads CASKPRACANCTC. Positions 193, 196, 204, and 207 each coordinate [4Fe-4S] cluster. 2 short sequence motifs (cx2C motif) span residues 193–196 and 204–207; these read CGSC and CANC. The fe-S binding site B stretch occupies residues 193-207; the sequence is CGSCYLGDAFRCANC.

This sequence belongs to the anamorsin family. As to quaternary structure, monomer. [2Fe-2S] cluster is required as a cofactor. The cofactor is [4Fe-4S] cluster.

The protein localises to the cytoplasm. The protein resides in the mitochondrion intermembrane space. In terms of biological role, component of the cytosolic iron-sulfur (Fe-S) protein assembly (CIA) machinery. Required for the maturation of extramitochondrial Fe-S proteins. Part of an electron transfer chain functioning in an early step of cytosolic Fe-S biogenesis, facilitating the de novo assembly of a [4Fe-4S] cluster on the cytosolic Fe-S scaffold complex. Electrons are transferred from NADPH via a FAD- and FMN-containing diflavin oxidoreductase. Together with the diflavin oxidoreductase, also required for the assembly of the diferric tyrosyl radical cofactor of ribonucleotide reductase (RNR), probably by providing electrons for reduction during radical cofactor maturation in the catalytic small subunit. This chain is Anamorsin homolog 1, found in Paramecium tetraurelia.